The primary structure comprises 38 residues: Photosystem II reaction center protein X (38 aa).

The chain crosses the membrane as a helical span at residues 9 to 29 (IASLTAGALVLSAIGIALIII).

It belongs to the PsbX family. Type 1 subfamily. As to quaternary structure, PSII is composed of 1 copy each of membrane proteins PsbA, PsbB, PsbC, PsbD, PsbE, PsbF, PsbH, PsbI, PsbJ, PsbK, PsbL, PsbM, PsbT, PsbX, PsbY, PsbZ, Psb30/Ycf12, at least 3 peripheral proteins of the oxygen-evolving complex and a large number of cofactors. It forms dimeric complexes.

It localises to the plastid. The protein localises to the chloroplast thylakoid membrane. Functionally, involved in the binding and/or turnover of quinones at the Q(B) site of photosystem II (PSII). PSII is a light-driven water plastoquinone oxidoreductase, using light energy to abstract electrons from H(2)O, generating a proton gradient subsequently used for ATP formation. This chain is Photosystem II reaction center protein X, found in Thalassiosira pseudonana (Marine diatom).